A 330-amino-acid chain; its full sequence is Aspartate--ammonia ligase (330 aa).

Belongs to the class-II aminoacyl-tRNA synthetase family. AsnA subfamily.

The protein resides in the cytoplasm. The enzyme catalyses L-aspartate + NH4(+) + ATP = L-asparagine + AMP + diphosphate + H(+). It functions in the pathway amino-acid biosynthesis; L-asparagine biosynthesis; L-asparagine from L-aspartate (ammonia route): step 1/1. The sequence is that of Aspartate--ammonia ligase from Haemophilus influenzae (strain 86-028NP).